Reading from the N-terminus, the 124-residue chain is Small ribosomal subunit protein uS12 (124 aa).

D89 is subject to 3-methylthioaspartic acid. Residues 104 to 124 are disordered; the sequence is SAGVQNRNRGRSKYGTKRPKK. A compositionally biased stretch (basic residues) spans 111–124; sequence NRGRSKYGTKRPKK.

It belongs to the universal ribosomal protein uS12 family. As to quaternary structure, part of the 30S ribosomal subunit. Contacts proteins S8 and S17. May interact with IF1 in the 30S initiation complex.

Its function is as follows. With S4 and S5 plays an important role in translational accuracy. Interacts with and stabilizes bases of the 16S rRNA that are involved in tRNA selection in the A site and with the mRNA backbone. Located at the interface of the 30S and 50S subunits, it traverses the body of the 30S subunit contacting proteins on the other side and probably holding the rRNA structure together. The combined cluster of proteins S8, S12 and S17 appears to hold together the shoulder and platform of the 30S subunit. The sequence is that of Small ribosomal subunit protein uS12 from Desulforamulus reducens (strain ATCC BAA-1160 / DSM 100696 / MI-1) (Desulfotomaculum reducens).